Consider the following 285-residue polypeptide: Acetyl-coenzyme A carboxylase carboxyl transferase subunit beta (285 aa).

Residues 29–285 (IMTKCPKCKK…ILKIHQEVTK (257 aa)) enclose the CoA carboxyltransferase N-terminal domain. 4 residues coordinate Zn(2+): cysteine 33, cysteine 36, cysteine 52, and cysteine 55. A C4-type zinc finger spans residues 33-55 (CPKCKKIMYTKELAENLNVCFNC).

This sequence belongs to the AccD/PCCB family. In terms of assembly, acetyl-CoA carboxylase is a heterohexamer composed of biotin carboxyl carrier protein (AccB), biotin carboxylase (AccC) and two subunits each of ACCase subunit alpha (AccA) and ACCase subunit beta (AccD). Zn(2+) serves as cofactor.

The protein resides in the cytoplasm. The catalysed reaction is N(6)-carboxybiotinyl-L-lysyl-[protein] + acetyl-CoA = N(6)-biotinyl-L-lysyl-[protein] + malonyl-CoA. The protein operates within lipid metabolism; malonyl-CoA biosynthesis; malonyl-CoA from acetyl-CoA: step 1/1. In terms of biological role, component of the acetyl coenzyme A carboxylase (ACC) complex. Biotin carboxylase (BC) catalyzes the carboxylation of biotin on its carrier protein (BCCP) and then the CO(2) group is transferred by the transcarboxylase to acetyl-CoA to form malonyl-CoA. This is Acetyl-coenzyme A carboxylase carboxyl transferase subunit beta from Staphylococcus aureus (strain Newman).